Reading from the N-terminus, the 251-residue chain is MLAKRIIPCLDVRDGRVVKGINFEGLRDAGSILEQARFYNNEMADELVFLDISASLESRRTTLEEVLKVSGEVFIPLTVGGGISSVERAHDAFLHGADKVSVNTAAVSEPELISRIAEKFGSQAVVVAIDVKKVDGRYIVHTHSGKKPTEYEAVEWAHKVQELGAGEILLTSMDRDGTQEGYDNEILKMISTTVHIPVIASGGAGNLEHLYRGFTDGHADAALAASIFHFRTYSIRQAKEYLRERGITVRL.

Residues Asp-11 and Asp-130 contribute to the active site.

Belongs to the HisA/HisF family. Heterodimer of HisH and HisF.

It localises to the cytoplasm. It carries out the reaction 5-[(5-phospho-1-deoxy-D-ribulos-1-ylimino)methylamino]-1-(5-phospho-beta-D-ribosyl)imidazole-4-carboxamide + L-glutamine = D-erythro-1-(imidazol-4-yl)glycerol 3-phosphate + 5-amino-1-(5-phospho-beta-D-ribosyl)imidazole-4-carboxamide + L-glutamate + H(+). The protein operates within amino-acid biosynthesis; L-histidine biosynthesis; L-histidine from 5-phospho-alpha-D-ribose 1-diphosphate: step 5/9. Its function is as follows. IGPS catalyzes the conversion of PRFAR and glutamine to IGP, AICAR and glutamate. The HisF subunit catalyzes the cyclization activity that produces IGP and AICAR from PRFAR using the ammonia provided by the HisH subunit. This chain is Imidazole glycerol phosphate synthase subunit HisF, found in Chlorobaculum tepidum (strain ATCC 49652 / DSM 12025 / NBRC 103806 / TLS) (Chlorobium tepidum).